A 499-amino-acid chain; its full sequence is Tektin-like protein 1 (499 aa).

Serine 14 bears the Phosphoserine mark. Residues tryptophan 201–lysine 225 adopt a coiled-coil conformation. The disordered stretch occupies residues valine 265 to isoleucine 286. Residues lysine 308 to isoleucine 328 adopt a coiled-coil conformation. Phosphotyrosine is present on tyrosine 372.

In terms of assembly, microtubule inner protein component of sperm flagellar doublet microtubules.

It localises to the cytoplasm. The protein resides in the cytoskeleton. Its subcellular location is the flagellum axoneme. Functionally, microtubule inner protein (MIP) part of the dynein-decorated doublet microtubules (DMTs) in sperm flagellar axoneme, which is required for motile flagellum beating. Forms an extensive interaction network cross-linking the lumen of axonemal doublet microtubules. This chain is Tektin-like protein 1, found in Mus musculus (Mouse).